Here is a 304-residue protein sequence, read N- to C-terminus: Glycine--tRNA ligase alpha subunit (304 aa).

This sequence belongs to the class-II aminoacyl-tRNA synthetase family. As to quaternary structure, tetramer of two alpha and two beta subunits.

It localises to the cytoplasm. The catalysed reaction is tRNA(Gly) + glycine + ATP = glycyl-tRNA(Gly) + AMP + diphosphate. This Photorhabdus laumondii subsp. laumondii (strain DSM 15139 / CIP 105565 / TT01) (Photorhabdus luminescens subsp. laumondii) protein is Glycine--tRNA ligase alpha subunit.